A 598-amino-acid polypeptide reads, in one-letter code: Beta-fructofuranosidase, insoluble isoenzyme 2 (598 aa).

Residues 1 to 25 form the signal peptide; that stretch reads MGVLGSRVAWAWLVQLLLLQQLAGA. The active site involves aspartate 69. Residues asparagine 164, asparagine 189, and asparagine 348 are each glycosylated (N-linked (GlcNAc...) asparagine).

It belongs to the glycosyl hydrolase 32 family. Expressed in leaves and flowers. Weakly expressed in seeds. Expressed in growing roots, node and the rapidly elongating zone of the internode.

The protein localises to the secreted. It localises to the cell wall. The catalysed reaction is Hydrolysis of terminal non-reducing beta-D-fructofuranoside residues in beta-D-fructofuranosides.. In terms of biological role, cell wall-associated invertase that cleaves sucrose into glucose and fructose and is required for assimilated carbon partitioning during early grain-filling. May be involved in sucrose unloaded in the ovular and stylar vascular tissues for the stimulation of starch synthesis in the developing endosperm during grain-filling. Sugar homeostasis mediated by CIN2/GIF1 plays an important role in constitutive and induced physical and chemical defense against pathogens. The polypeptide is Beta-fructofuranosidase, insoluble isoenzyme 2 (CIN2) (Oryza sativa subsp. japonica (Rice)).